Consider the following 113-residue polypeptide: N(2)-fixation sustaining protein CowN (113 aa).

The protein belongs to the CowN family.

Functionally, is required to sustain N(2)-dependent growth in the presence of low levels of carbon monoxide (CO). Probably acts by protecting the N(2) fixation ability of the nitrogenase complex, which is inactivated in the presence of CO. In Wolinella succinogenes (strain ATCC 29543 / DSM 1740 / CCUG 13145 / JCM 31913 / LMG 7466 / NCTC 11488 / FDC 602W) (Vibrio succinogenes), this protein is N(2)-fixation sustaining protein CowN.